The primary structure comprises 571 residues: Urease subunit alpha (571 aa).

Residues 133–571 (GGIDTHVHFI…LPLTQRYFLF (439 aa)) form the Urease domain. His138, His140, and Lys221 together coordinate Ni(2+). Lys221 carries the post-translational modification N6-carboxylysine. A substrate-binding site is contributed by His223. 2 residues coordinate Ni(2+): His250 and His276. The active-site Proton donor is the His324. Asp364 provides a ligand contact to Ni(2+).

The protein belongs to the metallo-dependent hydrolases superfamily. Urease alpha subunit family. In terms of assembly, heterotrimer of UreA (gamma), UreB (beta) and UreC (alpha) subunits. Three heterotrimers associate to form the active enzyme. It depends on Ni cation as a cofactor. Carboxylation allows a single lysine to coordinate two nickel ions.

It localises to the cytoplasm. It catalyses the reaction urea + 2 H2O + H(+) = hydrogencarbonate + 2 NH4(+). Its pathway is nitrogen metabolism; urea degradation; CO(2) and NH(3) from urea (urease route): step 1/1. The sequence is that of Urease subunit alpha from Staphylococcus aureus (strain MRSA252).